The sequence spans 239 residues: EF-hand domain-containing protein D2 (239 aa).

Residues 1–51 (MATDELASKLSRRLQMEDEGGEATEQPGLNGAAAAAAEAPDETAQALGSAD) form a disordered region. Alanine 2 carries the post-translational modification N-acetylalanine. Serine 11 bears the Phosphoserine mark. The span at 32 to 46 (AAAAAAEAPDETAQA) shows a compositional bias: low complexity. A phosphoserine mark is found at serine 73 and serine 75. Residue tyrosine 82 is modified to Phosphotyrosine. EF-hand domains follow at residues 91-126 (KQIKDMEKMFKQYDAGKDGFIDLMELKLMMEKLGAP) and 127-162 (QTHLGLKSMIQEVDEDFDSKLSFREFLLIFRKAAAG). Residues aspartate 104, aspartate 108, glutamate 115, aspartate 140, aspartate 142, aspartate 144, lysine 146, and glutamate 151 each coordinate Ca(2+). N6-acetyllysine is present on lysine 232.

In terms of assembly, interacts with CASP9; with inactive form.

It localises to the membrane raft. Functionally, may regulate B-cell receptor (BCR)-induced immature and primary B-cell apoptosis. Plays a role as negative regulator of the canonical NF-kappa-B-activating branch. Controls spontaneous apoptosis through the regulation of BCL2L1 abundance. The polypeptide is EF-hand domain-containing protein D2 (Efhd2) (Rattus norvegicus (Rat)).